We begin with the raw amino-acid sequence, 819 residues long: Leucine--tRNA ligase (819 aa).

A 'HIGH' region motif is present at residues 36 to 46 (PYPSGKIHMGH). The 'KMSKS' region motif lies at 586–590 (KMSKS). Lysine 589 is an ATP binding site.

Belongs to the class-I aminoacyl-tRNA synthetase family.

It is found in the cytoplasm. The enzyme catalyses tRNA(Leu) + L-leucine + ATP = L-leucyl-tRNA(Leu) + AMP + diphosphate. In Wolbachia pipientis subsp. Culex pipiens (strain wPip), this protein is Leucine--tRNA ligase.